Here is a 382-residue protein sequence, read N- to C-terminus: Hyaluronidase (382 aa).

Positions 1–28 (MSRPLVITEGMMIGVLLMLAPINALLLG) form a signal peptide, or 24. The propeptide occupies 29–33 (FVQST). Intrachain disulfides connect cysteine 54/cysteine 345 and cysteine 221/cysteine 233. An N-linked (GlcNAc...) asparagine glycan is attached at asparagine 115. Glutamate 145 serves as the catalytic Proton donor. A glycan (N-linked (GlcNAc...) (complex) asparagine) is linked at asparagine 263.

Belongs to the glycosyl hydrolase 56 family. As to quaternary structure, homotetramer. N-glycosylated. Glycans found include a majority of small oligosaccharides (Man1-3GlcNAc2), most of which are either alpha 1,3-monofucosylated or alpha 1,3-(alpha 1,6-)difucosylated at the innermost GlcNAc residue, approximately 5% of high-mannose type structures, and 8% contains the terminal trisaccharide GalNAc beta 1-4[Fuc alpha 1-3]GlcNAc beta 1-in beta 1,2-linkage to the core alpha 1,3-mannosyl residue. Expressed in the venom glands of worker bees. It is also detected in the testes of drones but not in the queen-bee venom glands or in pupae.

It localises to the secreted. It catalyses the reaction Random hydrolysis of (1-&gt;4)-linkages between N-acetyl-beta-D-glucosamine and D-glucuronate residues in hyaluronate.. Functionally, hydrolyzes high molecular weight hyaluronic acid to produce small oligosaccharides. This chain is Hyaluronidase, found in Apis mellifera (Honeybee).